Consider the following 97-residue polypeptide: MQQNEPTHYVIPDGEGNEFKFAERLRYESPRSSKTYIFLEPVGADYDEAEEVDIFVYELEEYGEGDDDFNLVPIAEDDAETWDEIEEVFNTLEDELD.

Belongs to the UPF0473 family.

The sequence is that of UPF0473 protein Exig_2070 from Exiguobacterium sibiricum (strain DSM 17290 / CCUG 55495 / CIP 109462 / JCM 13490 / 255-15).